The sequence spans 422 residues: Serine--tRNA ligase (422 aa).

229-231 (TAE) is a binding site for L-serine. Residue 260-262 (RKE) participates in ATP binding. Position 283 (Glu283) interacts with L-serine. 347–350 (EISS) is an ATP binding site. Ser383 contacts L-serine.

The protein belongs to the class-II aminoacyl-tRNA synthetase family. Type-1 seryl-tRNA synthetase subfamily. In terms of assembly, homodimer. The tRNA molecule binds across the dimer.

It is found in the cytoplasm. The enzyme catalyses tRNA(Ser) + L-serine + ATP = L-seryl-tRNA(Ser) + AMP + diphosphate + H(+). The catalysed reaction is tRNA(Sec) + L-serine + ATP = L-seryl-tRNA(Sec) + AMP + diphosphate + H(+). Its pathway is aminoacyl-tRNA biosynthesis; selenocysteinyl-tRNA(Sec) biosynthesis; L-seryl-tRNA(Sec) from L-serine and tRNA(Sec): step 1/1. Its function is as follows. Catalyzes the attachment of serine to tRNA(Ser). Is also able to aminoacylate tRNA(Sec) with serine, to form the misacylated tRNA L-seryl-tRNA(Sec), which will be further converted into selenocysteinyl-tRNA(Sec). This is Serine--tRNA ligase from Natranaerobius thermophilus (strain ATCC BAA-1301 / DSM 18059 / JW/NM-WN-LF).